Consider the following 1197-residue polypeptide: Transient receptor potential cation channel subfamily A member 1 (1197 aa).

Over 1–753 the chain is Cytoplasmic; it reads MTSGDKETPK…KWNSYGKYFH (753 aa). ANK repeat units lie at residues 89-118, 122-151, 155-184, 190-219, 224-253, 265-294, 298-327, 336-365, 369-398, 443-472, 476-505, 512-541, 544-574, and 578-607; these read KGRTAAHQAAARNRVNILRYIRDQNGDFNA, AGNTPLHIAVESDAYDALDYLLSIPVDTGV, KKQAPVHLATELNKVKSLRVMGQYRNVIDI, HGRTALHLAAIYDHEECARILITEFDACPR, NGYYPIHEAAKNASSKTMEVFFQWGEQRGC, EGNVPLHSAVHGGDIKAVELCLKSGAKIST, DLSTPVHLACAQGAIDIVKLMFEMQPMEKR, QKMTPLHCASMFDHPDIVSYLVAEGADINA, EHRSPLLLAASRSGWKTVHLLIRLGACISV, MGCSPLHYASRDGHIRSLENLIRLGACINL, NNESPLHFAARYGRYNTVRQLLDSEKGSFI, AGMTPLHISSQQGHTRVVQLLLNRGALLHR, TGRNPLQLAAMSGYTETIELLHSVHSHLLDQ, and DGNTALHLATMENKPHAISVLMSMGCKLVY. A helical transmembrane segment spans residues 754 to 774; it reads LANLLIYSIFLVFVTIYSSLM. At 775–827 the chain is on the extracellular side; it reads MNNIELKAGDNKTMSQYCNMGWEQLTMNLSQNPSVASQIRLDSCEERINRTTA. Residues asparagine 785, asparagine 802, and asparagine 823 are each glycosylated (N-linked (GlcNAc...) asparagine). Residues 828-848 form a helical membrane-spanning segment; sequence ILFCAVVIVVYILLNSMRELI. The Cytoplasmic portion of the chain corresponds to 849-856; that stretch reads QIYQQKLH. Residues 857–877 traverse the membrane as a helical segment; it reads YILETVNLISWVLYISALVMV. Topologically, residues 878–889 are extracellular; that stretch reads TPAFQPDGGINT. Residues 890 to 910 traverse the membrane as a helical segment; the sequence is IHYSAASIAVFLSWFRLLLFL. The Cytoplasmic portion of the chain corresponds to 911-932; it reads QRFDQVGIYVVMFLEILQTLIK. The chain crosses the membrane as a helical span at residues 933–953; it reads VLMVFSILIIAFGLAFYILLS. Residues 954-968 are Extracellular-facing; it reads KIIDPQPNHLSFSNI. Residues 969–989 constitute an intramembrane region (pore-forming); sequence PMSLLRTFSMMLGELDFVGTY. Topologically, residues 990–1004 are extracellular; it reads VNTYYRDQLKVPMTS. A helical transmembrane segment spans residues 1005 to 1025; sequence FLILSVFMILMPILLMNLLIG. Residues 1026–1197 lie on the Cytoplasmic side of the membrane; sequence LAVGDIESVR…RAALSFNKSM (172 aa).

It belongs to the transient receptor (TC 1.A.4) family. In terms of assembly, homotetramer.

The protein resides in the cell membrane. Essential for thermotaxis by sensing environmental temperature. Receptor-activated non-selective cation channel involved in detection of sensations such as temperature. Involved in heat nociception by being activated by warm temperature of about 24-29 degrees Celsius. The chain is Transient receptor potential cation channel subfamily A member 1 (TrpA1) from Drosophila melanogaster (Fruit fly).